The chain runs to 563 residues: Tripeptidyl-peptidase 1 (563 aa).

Positions 1-19 (MGLQACLLGLFALILSGKC) are cleaved as a signal peptide. Residues 20 to 195 (SYSPEPDQRR…PEPQVTGTVG (176 aa)) constitute a propeptide, removed in mature form. An intrachain disulfide couples C111 to C122. A Peptidase S53 domain is found at 199–563 (GVTPSVIRKR…PALLKTLLNP (365 aa)). 2 N-linked (GlcNAc...) asparagine glycosylation sites follow: N210 and N222. Active-site charge relay system residues include E272 and D276. 3 N-linked (GlcNAc...) asparagine glycosylation sites follow: N286, N313, and N443. Cystine bridges form between C365–C526 and C522–C537. Catalysis depends on S475, which acts as the Charge relay system. Residues D517 and V518 each contribute to the Ca(2+) site. Positions 539, 541, and 543 each coordinate Ca(2+).

As to quaternary structure, monomer. Interacts with CLN5. Interacts with CLN3. Ca(2+) is required as a cofactor. Post-translationally, activated by autocatalytic proteolytical processing upon acidification. N-glycosylation is required for processing and activity.

Its subcellular location is the lysosome. It is found in the melanosome. The enzyme catalyses Release of an N-terminal tripeptide from a polypeptide, but also has endopeptidase activity.. Functionally, lysosomal serine protease with tripeptidyl-peptidase I activity. May act as a non-specific lysosomal peptidase which generates tripeptides from the breakdown products produced by lysosomal proteinases. Requires substrates with an unsubstituted N-terminus. The protein is Tripeptidyl-peptidase 1 (TPP1) of Pan troglodytes (Chimpanzee).